Consider the following 300-residue polypeptide: 1D-myo-inositol 2-acetamido-2-deoxy-alpha-D-glucopyranoside deacetylase (300 aa).

Zn(2+) contacts are provided by His13, Asp16, and His147.

It belongs to the MshB deacetylase family. It depends on Zn(2+) as a cofactor.

It catalyses the reaction 1D-myo-inositol 2-acetamido-2-deoxy-alpha-D-glucopyranoside + H2O = 1D-myo-inositol 2-amino-2-deoxy-alpha-D-glucopyranoside + acetate. In terms of biological role, catalyzes the deacetylation of 1D-myo-inositol 2-acetamido-2-deoxy-alpha-D-glucopyranoside (GlcNAc-Ins) in the mycothiol biosynthesis pathway. The protein is 1D-myo-inositol 2-acetamido-2-deoxy-alpha-D-glucopyranoside deacetylase of Mycolicibacterium paratuberculosis (strain ATCC BAA-968 / K-10) (Mycobacterium paratuberculosis).